Consider the following 305-residue polypeptide: Protoheme IX farnesyltransferase (305 aa).

9 consecutive transmembrane segments (helical) span residues 29-49 (VTQL…PGMV), 51-71 (WSVL…AFAI), 101-121 (TLIF…VFAN), 123-143 (LTMW…TILL), 151-171 (IVIG…AVSG), 177-197 (AWFL…ALAL), 221-241 (LLHI…PFVY), 244-264 (SGYI…GYAW), and 283-303 (ILYL…KFVP).

The protein belongs to the UbiA prenyltransferase family. Protoheme IX farnesyltransferase subfamily.

It is found in the cell inner membrane. It carries out the reaction heme b + (2E,6E)-farnesyl diphosphate + H2O = Fe(II)-heme o + diphosphate. It functions in the pathway porphyrin-containing compound metabolism; heme O biosynthesis; heme O from protoheme: step 1/1. Functionally, converts heme B (protoheme IX) to heme O by substitution of the vinyl group on carbon 2 of heme B porphyrin ring with a hydroxyethyl farnesyl side group. The polypeptide is Protoheme IX farnesyltransferase (Cupriavidus metallidurans (strain ATCC 43123 / DSM 2839 / NBRC 102507 / CH34) (Ralstonia metallidurans)).